A 291-amino-acid polypeptide reads, in one-letter code: Ribonuclease Z (291 aa).

Zn(2+) is bound by residues histidine 60, histidine 62, aspartate 64, histidine 65, histidine 132, aspartate 200, and histidine 256. Aspartate 64 (proton acceptor) is an active-site residue.

The protein belongs to the RNase Z family. As to quaternary structure, homodimer. It depends on Zn(2+) as a cofactor.

It carries out the reaction Endonucleolytic cleavage of RNA, removing extra 3' nucleotides from tRNA precursor, generating 3' termini of tRNAs. A 3'-hydroxy group is left at the tRNA terminus and a 5'-phosphoryl group is left at the trailer molecule.. Zinc phosphodiesterase, which displays some tRNA 3'-processing endonuclease activity. Probably involved in tRNA maturation, by removing a 3'-trailer from precursor tRNA. This is Ribonuclease Z from Metallosphaera sedula (strain ATCC 51363 / DSM 5348 / JCM 9185 / NBRC 15509 / TH2).